An 852-amino-acid polypeptide reads, in one-letter code: Probable inorganic carbon transporter subunit DabA (852 aa).

Positions 370, 372, 554, and 569 each coordinate Zn(2+).

Belongs to the inorganic carbon transporter (TC 9.A.2) DabA family. Forms a complex with DabB. Zn(2+) is required as a cofactor.

Its subcellular location is the cell inner membrane. Part of an energy-coupled inorganic carbon pump. This Novosphingobium aromaticivorans (strain ATCC 700278 / DSM 12444 / CCUG 56034 / CIP 105152 / NBRC 16084 / F199) protein is Probable inorganic carbon transporter subunit DabA.